The sequence spans 202 residues: Ion-translocating oxidoreductase complex subunit G (202 aa).

Residues 11–31 (ACLMGFFSFFSLSSVIFVKNI) form a helical membrane-spanning segment. Thr176 carries the post-translational modification FMN phosphoryl threonine.

Belongs to the RnfG family. In terms of assembly, the complex is composed of six subunits: RnfA, RnfB, RnfC, RnfD, RnfE and RnfG. The cofactor is FMN.

It is found in the cell inner membrane. Part of a membrane-bound complex that couples electron transfer with translocation of ions across the membrane. In Buchnera aphidicola subsp. Schizaphis graminum (strain Sg), this protein is Ion-translocating oxidoreductase complex subunit G.